We begin with the raw amino-acid sequence, 364 residues long: Aminomethyltransferase (364 aa).

This sequence belongs to the GcvT family. In terms of assembly, the glycine cleavage system is composed of four proteins: P, T, L and H.

It carries out the reaction N(6)-[(R)-S(8)-aminomethyldihydrolipoyl]-L-lysyl-[protein] + (6S)-5,6,7,8-tetrahydrofolate = N(6)-[(R)-dihydrolipoyl]-L-lysyl-[protein] + (6R)-5,10-methylene-5,6,7,8-tetrahydrofolate + NH4(+). The glycine cleavage system catalyzes the degradation of glycine. The sequence is that of Aminomethyltransferase from Shewanella pealeana (strain ATCC 700345 / ANG-SQ1).